Consider the following 318-residue polypeptide: MRPERSFQGLILALQRYWADYGCVILQPYDMEVGAGTFHPATTLRALGPKPWRAAYVQPSRRPKDGRYGENPNRLQHYYQFQVILKPSPPDIQELYLKSLAAIGVDSHLHDIRFVEDDWESPTLGAWGLGWECWCDGMEVSQFTYFQQVAGVECAPVAGELTYGLERLAMYVQGVDRVYDLNFNGRDGADKVTYGDVFLQAEKEYSRHNFEHSDAAMLFEQFKMAESACQKYLAAGWDSDKREAHLMALPAYDQCIKASHAFNLLDARGVISVTERQSYILRVRELAKACGAAWLHTEAGGSSPSTSRQGEAPRGESQ.

The segment at 298 to 318 (EAGGSSPSTSRQGEAPRGESQ) is disordered. A compositionally biased stretch (polar residues) spans 300 to 309 (GGSSPSTSRQ).

This sequence belongs to the class-II aminoacyl-tRNA synthetase family. As to quaternary structure, tetramer of two alpha and two beta subunits.

Its subcellular location is the cytoplasm. It carries out the reaction tRNA(Gly) + glycine + ATP = glycyl-tRNA(Gly) + AMP + diphosphate. This is Glycine--tRNA ligase alpha subunit from Rhodopseudomonas palustris (strain BisB18).